The sequence spans 335 residues: Beta-ketoacyl-[acyl-carrier-protein] synthase III (335 aa).

Residues cysteine 119 and histidine 261 contribute to the active site. Positions glutamine 262–arginine 266 are ACP-binding. The active site involves asparagine 291.

It belongs to the thiolase-like superfamily. FabH family. As to quaternary structure, homodimer.

It is found in the cytoplasm. It catalyses the reaction malonyl-[ACP] + acetyl-CoA + H(+) = 3-oxobutanoyl-[ACP] + CO2 + CoA. It functions in the pathway lipid metabolism; fatty acid biosynthesis. Functionally, catalyzes the condensation reaction of fatty acid synthesis by the addition to an acyl acceptor of two carbons from malonyl-ACP. Catalyzes the first condensation reaction which initiates fatty acid synthesis and may therefore play a role in governing the total rate of fatty acid production. Possesses both acetoacetyl-ACP synthase and acetyl transacylase activities. Its substrate specificity determines the biosynthesis of branched-chain and/or straight-chain of fatty acids. In Prochlorococcus marinus (strain MIT 9515), this protein is Beta-ketoacyl-[acyl-carrier-protein] synthase III.